The primary structure comprises 264 residues: Transcription factor bHLH52 (264 aa).

In terms of domain architecture, bHLH spans 134 to 183; the sequence is RELSAQSIAARKRRRRITEKTQELGKLIPGSQKHNTAEMFNAAAKYVKFL.

Homodimer. As to expression, expressed constitutively in roots, leaves, stems, and flowers.

Its subcellular location is the nucleus. This chain is Transcription factor bHLH52 (BHLH52), found in Arabidopsis thaliana (Mouse-ear cress).